Consider the following 518-residue polypeptide: Chromosomal replication initiator protein DnaA (518 aa).

Residues 1–72 form a domain I, interacts with DnaA modulators region; sequence MTLAEFWPLC…VREELAAGRS (72 aa). The interval 72-180 is domain II; sequence SAFVFKPGEG…DAEEARYEQT (109 aa). The interval 145 to 172 is disordered; it reads EPRQAAGSASRPESVAVAKARTDVQRDA. The tract at residues 181–397 is domain III, AAA+ region; that stretch reads NLSPDYTFDT…GAFNRVGASS (217 aa). 4 residues coordinate ATP: glycine 225, glycine 227, lysine 228, and threonine 229. The tract at residues 398 to 518 is domain IV, binds dsDNA; it reads RFMNRPVIDI…YEKLLILIQN (121 aa).

Belongs to the DnaA family. Oligomerizes as a right-handed, spiral filament on DNA at oriC.

The protein resides in the cytoplasm. Its function is as follows. Plays an essential role in the initiation and regulation of chromosomal replication. ATP-DnaA binds to the origin of replication (oriC) to initiate formation of the DNA replication initiation complex once per cell cycle. Binds the DnaA box (a 9 base pair repeat at the origin) and separates the double-stranded (ds)DNA. Forms a right-handed helical filament on oriC DNA; dsDNA binds to the exterior of the filament while single-stranded (ss)DNA is stabiized in the filament's interior. The ATP-DnaA-oriC complex binds and stabilizes one strand of the AT-rich DNA unwinding element (DUE), permitting loading of DNA polymerase. After initiation quickly degrades to an ADP-DnaA complex that is not apt for DNA replication. Binds acidic phospholipids. The protein is Chromosomal replication initiator protein DnaA of Neisseria meningitidis serogroup B (strain ATCC BAA-335 / MC58).